Consider the following 364-residue polypeptide: SH3 and cysteine-rich domain-containing protein 3 (364 aa).

Disordered stretches follow at residues 1–89 (MTEK…NDKP) and 189–244 (NKER…HKQP). The span at 64 to 78 (YEEEEEEEEEEEEPP) shows a compositional bias: acidic residues. Residues 89–140 (PHKFKDHFFKKPKFCDVCARMIVLNNKFGLRCKNCKTNIHEHCQSYVEMQRC) form a Phorbol-ester/DAG-type zinc finger. Residues 212–242 (ESARPEEGKPQDGNPEGDKKAEKKTPDDKHK) show a composition bias toward basic and acidic residues. SH3 domains follow at residues 247–306 (QQSH…RVRA) and 307–364 (GERV…LEEI).

Interacts (via SH3 domains) with the calcium channels CACNA1S and CACNA1C. Component of a calcium channel complex with CACNA1S and CACNB1. Component of a calcium channel complex with CACNA1C and CACNB1.

It is found in the cytoplasm. Its subcellular location is the cell membrane. It localises to the sarcolemma. The protein resides in the T-tubule. Required for normal excitation-contraction coupling in skeletal muscle and for normal muscle contraction in response to membrane depolarization. Required for normal Ca(2+) release from the sarcplasmic reticulum, which ultimately leads to muscle contraction. Probably functions via its effects on muscle calcium channels. Increases CACNA1S channel activity, in addition to its role in enhancing the expression of CACNA1S at the cell membrane. Has a redundant role in promoting the expression of the calcium channel CACNA1S at the cell membrane. Slows down the inactivation rate of the calcium channel CACNA1C. In Homo sapiens (Human), this protein is SH3 and cysteine-rich domain-containing protein 3 (STAC3).